A 161-amino-acid chain; its full sequence is Nucleotide-binding protein azo2183 (161 aa).

The protein belongs to the YajQ family.

Nucleotide-binding protein. This Azoarcus sp. (strain BH72) protein is Nucleotide-binding protein azo2183.